The primary structure comprises 275 residues: Membrane protein insertase YidC 1 (275 aa).

The first 25 residues, 1–25 (MRKVLRVKKNIKIARIVPLVLLLVA), serve as a signal peptide directing secretion. Cys26 is lipidated: N-palmitoyl cysteine. Residue Cys26 is the site of S-diacylglycerol cysteine attachment. The next 5 helical transmembrane spans lie at 58–78 (SIGV…MPLF), 129–149 (YASL…FQAL), 171–191 (LYLL…LTNL), 198–216 (VMMT…FMGF), and 222–240 (VVLY…LLLL).

The protein belongs to the OXA1/ALB3/YidC family. Type 2 subfamily.

Its subcellular location is the cell membrane. Functionally, required for the insertion and/or proper folding and/or complex formation of integral membrane proteins into the membrane. Involved in integration of membrane proteins that insert both dependently and independently of the Sec translocase complex, as well as at least some lipoproteins. This chain is Membrane protein insertase YidC 1, found in Streptococcus pyogenes serotype M1.